The following is a 520-amino-acid chain: DEP domain-containing protein 7 (520 aa).

In terms of domain architecture, DEP spans 45 to 137 (ALTQVEVKKR…SSCSLYRFIN (93 aa)). A disordered region spans residues 148-167 (KSNGRCTPQRPKHSSFQSAP).

Belongs to the DEPDC7 family.

This is DEP domain-containing protein 7 (depdc7) from Xenopus tropicalis (Western clawed frog).